We begin with the raw amino-acid sequence, 492 residues long: Serine carboxypeptidase-like 31 (492 aa).

Positions 1–30 (MDNYQTKNISNLLTSLCFTTLLILAPVVIC) are cleaved as a signal peptide. 3 disulfides stabilise this stretch: cysteine 105–cysteine 376, cysteine 270–cysteine 283, and cysteine 307–cysteine 344. Asparagine 156 is a glycosylation site (N-linked (GlcNAc...) asparagine). The active site involves serine 198. 2 N-linked (GlcNAc...) asparagine glycosylation sites follow: asparagine 221 and asparagine 271. N-linked (GlcNAc...) asparagine glycosylation is found at asparagine 372 and asparagine 383. Catalysis depends on residues aspartate 413 and histidine 465.

It belongs to the peptidase S10 family. As to expression, expressed in roots, senescent leaves, stems, flowers and siliques.

The protein localises to the secreted. Probable carboxypeptidase. The sequence is that of Serine carboxypeptidase-like 31 (SCPL31) from Arabidopsis thaliana (Mouse-ear cress).